The sequence spans 345 residues: Anthranilate phosphoribosyltransferase (345 aa).

5-phospho-alpha-D-ribose 1-diphosphate contacts are provided by residues Gly-80, 83-84 (GD), Thr-88, 90-93 (NIST), 108-116 (KHGNRSVSS), and Ser-120. Gly-80 is a binding site for anthranilate. Mg(2+) is bound at residue Ser-92. Asn-111 contributes to the anthranilate binding site. Arg-166 serves as a coordination point for anthranilate. Mg(2+) is bound by residues Asp-225 and Glu-226.

It belongs to the anthranilate phosphoribosyltransferase family. Homodimer. Requires Mg(2+) as cofactor.

The enzyme catalyses N-(5-phospho-beta-D-ribosyl)anthranilate + diphosphate = 5-phospho-alpha-D-ribose 1-diphosphate + anthranilate. The protein operates within amino-acid biosynthesis; L-tryptophan biosynthesis; L-tryptophan from chorismate: step 2/5. Its function is as follows. Catalyzes the transfer of the phosphoribosyl group of 5-phosphorylribose-1-pyrophosphate (PRPP) to anthranilate to yield N-(5'-phosphoribosyl)-anthranilate (PRA). This Pelotomaculum thermopropionicum (strain DSM 13744 / JCM 10971 / SI) protein is Anthranilate phosphoribosyltransferase.